The sequence spans 216 residues: NADH-quinone oxidoreductase subunit C (216 aa).

This sequence belongs to the complex I 30 kDa subunit family. NDH-1 is composed of 14 different subunits. Subunits NuoB, C, D, E, F, and G constitute the peripheral sector of the complex.

The protein resides in the cell inner membrane. It catalyses the reaction a quinone + NADH + 5 H(+)(in) = a quinol + NAD(+) + 4 H(+)(out). Functionally, NDH-1 shuttles electrons from NADH, via FMN and iron-sulfur (Fe-S) centers, to quinones in the respiratory chain. The immediate electron acceptor for the enzyme in this species is believed to be ubiquinone. Couples the redox reaction to proton translocation (for every two electrons transferred, four hydrogen ions are translocated across the cytoplasmic membrane), and thus conserves the redox energy in a proton gradient. This Francisella tularensis subsp. tularensis (strain FSC 198) protein is NADH-quinone oxidoreductase subunit C.